The primary structure comprises 239 residues: 1-(5-phosphoribosyl)-5-[(5-phosphoribosylamino)methylideneamino] imidazole-4-carboxamide isomerase (239 aa).

Residue D9 is the Proton acceptor of the active site. The active-site Proton donor is D131.

This sequence belongs to the HisA/HisF family.

It is found in the cytoplasm. It catalyses the reaction 1-(5-phospho-beta-D-ribosyl)-5-[(5-phospho-beta-D-ribosylamino)methylideneamino]imidazole-4-carboxamide = 5-[(5-phospho-1-deoxy-D-ribulos-1-ylimino)methylamino]-1-(5-phospho-beta-D-ribosyl)imidazole-4-carboxamide. The protein operates within amino-acid biosynthesis; L-histidine biosynthesis; L-histidine from 5-phospho-alpha-D-ribose 1-diphosphate: step 4/9. This chain is 1-(5-phosphoribosyl)-5-[(5-phosphoribosylamino)methylideneamino] imidazole-4-carboxamide isomerase, found in Parabacteroides distasonis (strain ATCC 8503 / DSM 20701 / CIP 104284 / JCM 5825 / NCTC 11152).